We begin with the raw amino-acid sequence, 70 residues long: Large ribosomal subunit protein bL31c (70 aa).

Belongs to the bacterial ribosomal protein bL31 family. Type A subfamily. As to quaternary structure, part of the 50S ribosomal subunit.

The protein resides in the plastid. It is found in the chloroplast. Binds the 23S rRNA. This is Large ribosomal subunit protein bL31c from Porphyra purpurea (Red seaweed).